The chain runs to 279 residues: Thymidylate synthase (279 aa).

Position 133-134 (133-134 (RR)) interacts with dUMP. The Nucleophile role is filled by Cys154. DUMP contacts are provided by residues 178-181 (RSND), Asn189, and 219-221 (HIY). Asp181 serves as a coordination point for (6R)-5,10-methylene-5,6,7,8-tetrahydrofolate. Position 278 (Ala278) interacts with (6R)-5,10-methylene-5,6,7,8-tetrahydrofolate.

Belongs to the thymidylate synthase family. Bacterial-type ThyA subfamily. Homodimer.

Its subcellular location is the cytoplasm. It carries out the reaction dUMP + (6R)-5,10-methylene-5,6,7,8-tetrahydrofolate = 7,8-dihydrofolate + dTMP. It functions in the pathway pyrimidine metabolism; dTTP biosynthesis. Its function is as follows. Catalyzes the reductive methylation of 2'-deoxyuridine-5'-monophosphate (dUMP) to 2'-deoxythymidine-5'-monophosphate (dTMP) while utilizing 5,10-methylenetetrahydrofolate (mTHF) as the methyl donor and reductant in the reaction, yielding dihydrofolate (DHF) as a by-product. This enzymatic reaction provides an intracellular de novo source of dTMP, an essential precursor for DNA biosynthesis. In Streptococcus pneumoniae (strain 70585), this protein is Thymidylate synthase.